We begin with the raw amino-acid sequence, 740 residues long: Phosphoribosylformylglycinamidine synthase subunit PurL (740 aa).

The active site involves His53. ATP contacts are provided by Tyr56 and Lys95. Residue Glu97 participates in Mg(2+) binding. Substrate contacts are provided by residues 98–101 (SHNH) and Arg120. Catalysis depends on His99, which acts as the Proton acceptor. Asp121 contributes to the Mg(2+) binding site. Gln244 lines the substrate pocket. Position 272 (Asp272) interacts with Mg(2+). 316–318 (ESQ) is a binding site for substrate. ATP is bound by residues Asp497 and Gly534. Asn535 contributes to the Mg(2+) binding site. Ser537 provides a ligand contact to substrate.

It belongs to the FGAMS family. As to quaternary structure, monomer. Part of the FGAM synthase complex composed of 1 PurL, 1 PurQ and 2 PurS subunits.

It localises to the cytoplasm. The catalysed reaction is N(2)-formyl-N(1)-(5-phospho-beta-D-ribosyl)glycinamide + L-glutamine + ATP + H2O = 2-formamido-N(1)-(5-O-phospho-beta-D-ribosyl)acetamidine + L-glutamate + ADP + phosphate + H(+). Its pathway is purine metabolism; IMP biosynthesis via de novo pathway; 5-amino-1-(5-phospho-D-ribosyl)imidazole from N(2)-formyl-N(1)-(5-phospho-D-ribosyl)glycinamide: step 1/2. Part of the phosphoribosylformylglycinamidine synthase complex involved in the purines biosynthetic pathway. Catalyzes the ATP-dependent conversion of formylglycinamide ribonucleotide (FGAR) and glutamine to yield formylglycinamidine ribonucleotide (FGAM) and glutamate. The FGAM synthase complex is composed of three subunits. PurQ produces an ammonia molecule by converting glutamine to glutamate. PurL transfers the ammonia molecule to FGAR to form FGAM in an ATP-dependent manner. PurS interacts with PurQ and PurL and is thought to assist in the transfer of the ammonia molecule from PurQ to PurL. In Rhodospirillum rubrum (strain ATCC 11170 / ATH 1.1.1 / DSM 467 / LMG 4362 / NCIMB 8255 / S1), this protein is Phosphoribosylformylglycinamidine synthase subunit PurL.